Reading from the N-terminus, the 539-residue chain is uncharacterized protein (539 aa).

S216 (acyl-ester intermediate) is an active-site residue.

This sequence belongs to the type-B carboxylesterase/lipase family.

The protein localises to the cytoplasm. Its subcellular location is the nucleus. This is an uncharacterized protein from Schizosaccharomyces pombe (strain 972 / ATCC 24843) (Fission yeast).